The following is a 484-amino-acid chain: UDP-N-acetylmuramoyl-L-alanyl-D-glutamate--L-lysine ligase (484 aa).

S43 serves as a coordination point for UDP-N-acetyl-alpha-D-muramoyl-L-alanyl-D-glutamate. An ATP-binding site is contributed by 119–125 (GTKGKTT). UDP-N-acetyl-alpha-D-muramoyl-L-alanyl-D-glutamate is bound by residues 161-162 (TT), S188, and R196. K230 carries the post-translational modification N6-carboxylysine. The short motif at 405–408 (DDPN) is the L-lysine recognition motif element.

Belongs to the MurCDEF family. MurE subfamily. In terms of processing, carboxylation is probably crucial for Mg(2+) binding and, consequently, for the gamma-phosphate positioning of ATP.

The protein resides in the cytoplasm. It catalyses the reaction UDP-N-acetyl-alpha-D-muramoyl-L-alanyl-D-glutamate + L-lysine + ATP = UDP-N-acetyl-alpha-D-muramoyl-L-alanyl-gamma-D-glutamyl-L-lysine + ADP + phosphate + H(+). Its pathway is cell wall biogenesis; peptidoglycan biosynthesis. Its function is as follows. Catalyzes the addition of L-lysine to the nucleotide precursor UDP-N-acetylmuramoyl-L-alanyl-D-glutamate (UMAG) in the biosynthesis of bacterial cell-wall peptidoglycan. The protein is UDP-N-acetylmuramoyl-L-alanyl-D-glutamate--L-lysine ligase of Streptococcus agalactiae serotype III (strain NEM316).